Here is a 240-residue protein sequence, read N- to C-terminus: Ribonuclease PH (240 aa).

Residues Arg87 and 125–127 contribute to the phosphate site; that span reads GTR.

It belongs to the RNase PH family. Homohexameric ring arranged as a trimer of dimers.

The catalysed reaction is tRNA(n+1) + phosphate = tRNA(n) + a ribonucleoside 5'-diphosphate. Functionally, phosphorolytic 3'-5' exoribonuclease that plays an important role in tRNA 3'-end maturation. Removes nucleotide residues following the 3'-CCA terminus of tRNAs; can also add nucleotides to the ends of RNA molecules by using nucleoside diphosphates as substrates, but this may not be physiologically important. Probably plays a role in initiation of 16S rRNA degradation (leading to ribosome degradation) during starvation. The protein is Ribonuclease PH of Pseudomonas putida (strain GB-1).